A 426-amino-acid chain; its full sequence is High affinity 3',5'-cyclic-AMP phosphodiesterase 7A (426 aa).

Residues leucine 80–glutamine 402 form the PDEase domain. The Proton donor role is filled by histidine 156. A divalent metal cation is bound by residues histidine 160, histidine 196, aspartate 197, and aspartate 306.

The protein belongs to the cyclic nucleotide phosphodiesterase family. PDE7 subfamily. Interacts with CBFA2T3. A divalent metal cation serves as cofactor.

The protein resides in the cytoplasm. The protein localises to the cytosol. It carries out the reaction 3',5'-cyclic AMP + H2O = AMP + H(+). It functions in the pathway purine metabolism; 3',5'-cyclic AMP degradation; AMP from 3',5'-cyclic AMP: step 1/1. Functionally, hydrolyzes the second messenger cAMP, which is a key regulator of many important physiological processes. May have a role in muscle signal transduction. This chain is High affinity 3',5'-cyclic-AMP phosphodiesterase 7A (Pde7a), found in Rattus norvegicus (Rat).